The chain runs to 700 residues: Glycine--tRNA ligase beta subunit (700 aa).

It belongs to the class-II aminoacyl-tRNA synthetase family. Tetramer of two alpha and two beta subunits.

It localises to the cytoplasm. The enzyme catalyses tRNA(Gly) + glycine + ATP = glycyl-tRNA(Gly) + AMP + diphosphate. The polypeptide is Glycine--tRNA ligase beta subunit (Magnetococcus marinus (strain ATCC BAA-1437 / JCM 17883 / MC-1)).